Here is a 295-residue protein sequence, read N- to C-terminus: Bifunctional protein FolD (295 aa).

Residues 166-168 (GRS), Thr-195, and Val-236 contribute to the NADP(+) site.

The protein belongs to the tetrahydrofolate dehydrogenase/cyclohydrolase family. In terms of assembly, homodimer.

The enzyme catalyses (6R)-5,10-methylene-5,6,7,8-tetrahydrofolate + NADP(+) = (6R)-5,10-methenyltetrahydrofolate + NADPH. It carries out the reaction (6R)-5,10-methenyltetrahydrofolate + H2O = (6R)-10-formyltetrahydrofolate + H(+). It participates in one-carbon metabolism; tetrahydrofolate interconversion. In terms of biological role, catalyzes the oxidation of 5,10-methylenetetrahydrofolate to 5,10-methenyltetrahydrofolate and then the hydrolysis of 5,10-methenyltetrahydrofolate to 10-formyltetrahydrofolate. This is Bifunctional protein FolD from Syntrophobacter fumaroxidans (strain DSM 10017 / MPOB).